The sequence spans 371 residues: Chaperone protein DnaJ (371 aa).

Residues D5–G69 enclose the J domain. The segment at G133–R215 adopts a CR-type zinc-finger fold. Zn(2+) contacts are provided by C146, C149, C163, C166, C189, C192, C203, and C206. CXXCXGXG motif repeat units lie at residues C146–G153, C163–G170, C189–G196, and C203–G210.

This sequence belongs to the DnaJ family. In terms of assembly, homodimer. It depends on Zn(2+) as a cofactor.

It is found in the cytoplasm. Its function is as follows. Participates actively in the response to hyperosmotic and heat shock by preventing the aggregation of stress-denatured proteins and by disaggregating proteins, also in an autonomous, DnaK-independent fashion. Unfolded proteins bind initially to DnaJ; upon interaction with the DnaJ-bound protein, DnaK hydrolyzes its bound ATP, resulting in the formation of a stable complex. GrpE releases ADP from DnaK; ATP binding to DnaK triggers the release of the substrate protein, thus completing the reaction cycle. Several rounds of ATP-dependent interactions between DnaJ, DnaK and GrpE are required for fully efficient folding. Also involved, together with DnaK and GrpE, in the DNA replication of plasmids through activation of initiation proteins. This Bacillus cereus (strain ATCC 10987 / NRS 248) protein is Chaperone protein DnaJ.